Here is a 691-residue protein sequence, read N- to C-terminus: MARTQAEPPASQPDARAAWLRDQLERANYAYYVLDQPDLPDAEYDRLFGELQQLETDHPDLVTPDSPTQRVGGEVAGGFTPVVHDAPMLSLNNGFADEDIAAFDKRVADALGKTTDLAGSVTDPVEYACELKFDGLAISLRYEHGVFVQASTRGDGTTGEDVTENVRTIRSIPLKLKGAHVPALLDVRGEVLMFKRDFARLNERQRAAEQREFANPRNAAAGSLRQLDPKITAQRPLSFFAYGIGVLDGMPMPDTHSALLDWYESFGLPVNRERAVVYGADGLLGFFRKVGEKRESLPYDIDGVVYKVNRRDEQDRLGFVSRAPRFALAHKFPAQEALTRLVAIDVQVGRTGAITPVARLEPVFVGGATVTNATLHNEDEVRRKDIRIGDTVIVRRAGDVIPEVVGALLDRRPDDAAEFVMPTECPVCGSKIERLPDEAIARCTGGLFCPAQRKQALWHFAQRRALDIDGLGEKIIDQLVELNLVRTPADLFNLGFATLAELDRFAEKSAQNLLDSLEKAKHTTLARFIYGLGIRHVGESTAKDLAKHFGSLTPIMDASIEELLEVNDVGPIVAESIHQFFAEEHNRTVIEQLRAPGKVTWAEGPPAPRAPQGVLAGKTVVLTGTLPNLTRDAAKEMLEAAGAKVAGSVSKKTDYVVAGADAGSKLAKAEELGIPVLDEDGLHQLLEGNTP.

Residues 41-45 (DAEYD), 90-91 (SL), and E130 contribute to the NAD(+) site. The N6-AMP-lysine intermediate role is filled by K132. 4 residues coordinate NAD(+): R153, E190, K307, and K331. C425, C428, C443, and C449 together coordinate Zn(2+). A BRCT domain is found at 610–691 (APQGVLAGKT…LHQLLEGNTP (82 aa)).

Belongs to the NAD-dependent DNA ligase family. LigA subfamily. The cofactor is Mg(2+). Requires Mn(2+) as cofactor.

It catalyses the reaction NAD(+) + (deoxyribonucleotide)n-3'-hydroxyl + 5'-phospho-(deoxyribonucleotide)m = (deoxyribonucleotide)n+m + AMP + beta-nicotinamide D-nucleotide.. Its function is as follows. DNA ligase that catalyzes the formation of phosphodiester linkages between 5'-phosphoryl and 3'-hydroxyl groups in double-stranded DNA using NAD as a coenzyme and as the energy source for the reaction. It is essential for DNA replication and repair of damaged DNA. The polypeptide is DNA ligase (Burkholderia ambifaria (strain ATCC BAA-244 / DSM 16087 / CCUG 44356 / LMG 19182 / AMMD) (Burkholderia cepacia (strain AMMD))).